The sequence spans 355 residues: DNA polymerase IV (355 aa).

The UmuC domain occupies 7 to 188; it reads IIHIDMDCFY…LPLSKIPGVG (182 aa). Positions 11 and 106 each coordinate Mg(2+). E107 is an active-site residue.

The protein belongs to the DNA polymerase type-Y family. Monomer. Requires Mg(2+) as cofactor.

Its subcellular location is the cytoplasm. The enzyme catalyses DNA(n) + a 2'-deoxyribonucleoside 5'-triphosphate = DNA(n+1) + diphosphate. In terms of biological role, poorly processive, error-prone DNA polymerase involved in untargeted mutagenesis. Copies undamaged DNA at stalled replication forks, which arise in vivo from mismatched or misaligned primer ends. These misaligned primers can be extended by PolIV. Exhibits no 3'-5' exonuclease (proofreading) activity. May be involved in translesional synthesis, in conjunction with the beta clamp from PolIII. The polypeptide is DNA polymerase IV (Mannheimia succiniciproducens (strain KCTC 0769BP / MBEL55E)).